The chain runs to 540 residues: Glucose-6-phosphate isomerase (540 aa).

Residue Glu-346 is the Proton donor of the active site. Active-site residues include His-377 and Lys-505.

It belongs to the GPI family.

The protein resides in the cytoplasm. It carries out the reaction alpha-D-glucose 6-phosphate = beta-D-fructose 6-phosphate. The protein operates within carbohydrate biosynthesis; gluconeogenesis. It functions in the pathway carbohydrate degradation; glycolysis; D-glyceraldehyde 3-phosphate and glycerone phosphate from D-glucose: step 2/4. Catalyzes the reversible isomerization of glucose-6-phosphate to fructose-6-phosphate. The sequence is that of Glucose-6-phosphate isomerase from Francisella tularensis subsp. tularensis (strain WY96-3418).